The following is a 253-amino-acid chain: Sec-independent protein translocase protein TatC (253 aa).

A run of 5 helical transmembrane segments spans residues 19 to 39, 70 to 90, 109 to 129, 154 to 174, and 194 to 214; these read ILIIVVFFVIALVVGFFLATP, FAFTSAFILVFPIILYQLWAF, IAFFLFLGGLSFAYFILFPFL, FLFQITMPFGVLFQLPVVVMF, and FFVLLVVAGFITPPELISHLM.

This sequence belongs to the TatC family. In terms of assembly, forms a complex with TatA.

Its subcellular location is the cell membrane. In terms of biological role, part of the twin-arginine translocation (Tat) system that transports large folded proteins containing a characteristic twin-arginine motif in their signal peptide across membranes. The chain is Sec-independent protein translocase protein TatC from Halalkalibacterium halodurans (strain ATCC BAA-125 / DSM 18197 / FERM 7344 / JCM 9153 / C-125) (Bacillus halodurans).